The primary structure comprises 530 residues: tRNA-2-methylthio-N(6)-dimethylallyladenosine synthase (530 aa).

The region spanning 19-134 (RTYEVRTYGC…LPTLLERARH (116 aa)) is the MTTase N-terminal domain. 6 residues coordinate [4Fe-4S] cluster: Cys28, Cys63, Cys97, Cys171, Cys175, and Cys178. In terms of domain architecture, Radical SAM core spans 157-387 (RDEIASGWVS…TALQERISHE (231 aa)). The 71-residue stretch at 390–460 (QRVVGRTVEV…PFHLIADSVD (71 aa)) folds into the TRAM domain. The tract at residues 509-530 (VPTTASTSAPVGDGSAHPRHRA) is disordered.

This sequence belongs to the methylthiotransferase family. MiaB subfamily. In terms of assembly, monomer. It depends on [4Fe-4S] cluster as a cofactor.

It localises to the cytoplasm. It catalyses the reaction N(6)-dimethylallyladenosine(37) in tRNA + (sulfur carrier)-SH + AH2 + 2 S-adenosyl-L-methionine = 2-methylsulfanyl-N(6)-dimethylallyladenosine(37) in tRNA + (sulfur carrier)-H + 5'-deoxyadenosine + L-methionine + A + S-adenosyl-L-homocysteine + 2 H(+). Functionally, catalyzes the methylthiolation of N6-(dimethylallyl)adenosine (i(6)A), leading to the formation of 2-methylthio-N6-(dimethylallyl)adenosine (ms(2)i(6)A) at position 37 in tRNAs that read codons beginning with uridine. In Clavibacter sepedonicus (Clavibacter michiganensis subsp. sepedonicus), this protein is tRNA-2-methylthio-N(6)-dimethylallyladenosine synthase.